Reading from the N-terminus, the 377-residue chain is Probable isocitrate dehydrogenase [NAD] subunit alpha, mitochondrial (377 aa).

Positions 131, 141, 162, and 249 each coordinate substrate. Aspartate 249, aspartate 273, and aspartate 277 together coordinate Mg(2+).

It belongs to the isocitrate and isopropylmalate dehydrogenases family. As to quaternary structure, heterooligomer of subunits alpha, beta, and gamma in the apparent ratio of 2:1:1. Mg(2+) serves as cofactor. The cofactor is Mn(2+).

The protein resides in the mitochondrion. It carries out the reaction D-threo-isocitrate + NAD(+) = 2-oxoglutarate + CO2 + NADH. In terms of biological role, probable catalytic subunit of the enzyme which catalyzes the decarboxylation of isocitrate (ICT) into alpha-ketoglutarate. This chain is Probable isocitrate dehydrogenase [NAD] subunit alpha, mitochondrial, found in Drosophila melanogaster (Fruit fly).